The chain runs to 109 residues: Preprofallaxidin-8 (109 aa).

The signal sequence occupies residues 1-22 (MASLKKSLFLVLFLGLLSLSIC). The propeptide occupies 23–46 (EEQKRENEEDAEDENHEEESEEKR). Residues 27-46 (RENEEDAEDENHEEESEEKR) are disordered. A compositionally biased stretch (acidic residues) spans 30–42 (EEDAEDENHEEES). Leu62 carries the post-translational modification Leucine amide. Positions 66 to 70 (SEEKR) are excised as a propeptide. A Methionine amide modification is found at Met75. Positions 79-83 (SEEKR) are excised as a propeptide. At Met88 the chain carries Methionine amide. 2 consecutive propeptides follow at residues 92-96 (SEEKR) and Ala108.

This sequence belongs to the frog skin active peptide (FSAP) family. Brevinin subfamily. As to expression, expressed by the skin glands.

The protein resides in the secreted. Its function is as follows. Fallaxidin-2.1 shows no antibacterial activity against Gram-positive or Gram-negative bacteria. Does not inhibit the formation of NO by neuronal nitric oxide synthase. Has no effect on splenocyte proliferation or smooth muscle contraction. Functionally, fallaxidin-3.2 shows antibacterial activity against the Gram-positive bacteria E.faecalis (MIC=100 uM) and L.lactis (MIC=500 uM). No antibacterial activity against the Gram-positive bacteria B.cereus, L.innocua, M.luteus, S.epidermidis, S.uberis and S.aureus, or the Gram-negative bacteria E.cloacae and E.coli. The protein is Preprofallaxidin-8 of Litoria fallax (Eastern dwarf tree frog).